We begin with the raw amino-acid sequence, 122 residues long: Probable DNA-directed RNA polymerase II subunit RPB11 (122 aa).

The protein belongs to the archaeal Rpo11/eukaryotic RPB11/RPC19 RNA polymerase subunit family. Component of the RNA polymerase II (Pol II) complex consisting of 12 subunits.

The protein resides in the nucleus. Functionally, DNA-dependent RNA polymerase catalyzes the transcription of DNA into RNA using the four ribonucleoside triphosphates as substrates. Component of RNA polymerase II which synthesizes mRNA precursors and many functional non-coding RNAs. Pol II is the central component of the basal RNA polymerase II transcription machinery. It is composed of mobile elements that move relative to each other. RPB11 is part of the core element with the central large cleft. This is Probable DNA-directed RNA polymerase II subunit RPB11 (rpb-11) from Caenorhabditis briggsae.